A 423-amino-acid polypeptide reads, in one-letter code: Ferrochelatase, mitochondrial (423 aa).

The N-terminal 29 residues, 1–29, are a transit peptide targeting the mitochondrion; that stretch reads MISRKIISTINSKTFYNKSLSYCTVNNNK. Cysteine 173 contributes to the [2Fe-2S] cluster binding site. Active-site residues include histidine 207 and aspartate 380. 3 residues coordinate [2Fe-2S] cluster: cysteine 401, cysteine 404, and cysteine 411.

The protein belongs to the ferrochelatase family. In terms of assembly, monomer. The cofactor is [2Fe-2S] cluster.

It is found in the mitochondrion inner membrane. The catalysed reaction is heme b + 2 H(+) = protoporphyrin IX + Fe(2+). It functions in the pathway porphyrin-containing compound metabolism; protoheme biosynthesis; protoheme from protoporphyrin-IX: step 1/1. Catalyzes the ferrous insertion into protoporphyrin IX. The polypeptide is Ferrochelatase, mitochondrial (hemH) (Dictyostelium discoideum (Social amoeba)).